Reading from the N-terminus, the 197-residue chain is Carnitine operon protein CaiE (197 aa).

A disordered region spans residues 177 to 197 (TAPEANRPRLRGTTEVKPKGQ). The segment covering 188-197 (GTTEVKPKGQ) has biased composition (basic and acidic residues).

Belongs to the transferase hexapeptide repeat family.

The protein operates within amine and polyamine metabolism; carnitine metabolism. In terms of biological role, overproduction of CaiE stimulates the activity of CaiB and CaiD. The polypeptide is Carnitine operon protein CaiE (Proteus sp. (strain LE138)).